We begin with the raw amino-acid sequence, 1026 residues long: Glutactin (1026 aa).

The N-terminal stretch at 1-17 (MKPLLLVLALCGAQVHA) is a signal peptide. Tyrosine 26 and tyrosine 29 each carry sulfotyrosine. N-linked (GlcNAc...) asparagine glycosylation occurs at asparagine 115. Cysteine 123 and cysteine 145 are oxidised to a cystine. The residue at position 182 (tyrosine 182) is a Sulfotyrosine. Cysteine 298 and cysteine 316 are joined by a disulfide. Residues asparagine 368 and asparagine 402 are each glycosylated (N-linked (GlcNAc...) asparagine). The residue at position 559 (tyrosine 559) is a Sulfotyrosine. Residues 601–641 (PITTTTTTTTTTTTTSRPYAYNPYANWQNRPSQQHPNWHPA) form a disordered region. A compositionally biased stretch (low complexity) spans 603 to 615 (TTTTTTTTTTTTT). A compositionally biased stretch (polar residues) spans 625-636 (ANWQNRPSQQHP). At tyrosine 645 the chain carries Sulfotyrosine. Disordered stretches follow at residues 659–695 (EREQ…REQE) and 723–1026 (EREQ…NSRN). A compositionally biased stretch (basic and acidic residues) spans 723–752 (EREQYEREQQEREQREREELERQQREREQQ). Residue tyrosine 727 is modified to Sulfotyrosine. A glycan (N-linked (GlcNAc...) asparagine) is linked at asparagine 810. Basic and acidic residues predominate over residues 811-854 (FSEEDREQQQQEQLRREQQEQQEREYQLQLEREQQEREQQERGQ). Sulfotyrosine occurs at positions 836, 862, 865, 868, 922, and 928. The span at 855–866 (QEPGPEEYPSYE) shows a compositional bias: low complexity. Basic and acidic residues predominate over residues 867–893 (EYSRALQEKNAERDRIYAEEQERERQQ). Residues 923-944 (DGDRSYAEEQEREQQRRDQVEQ) show a composition bias toward basic and acidic residues. Residues 945–969 (EREEQPDEDQGEEYERSPDEEEAAE) are compositionally biased toward acidic residues. Sulfotyrosine is present on residues tyrosine 981, tyrosine 984, and tyrosine 1006. Basic and acidic residues predominate over residues 1002–1026 (EEERYRAQQEEEDRIQAERERNSRN).

This sequence in the N-terminal section; belongs to the type-B carboxylesterase/lipase family. Post-translationally, extensively O-glycosylated and also N-glycosylated. About four tyrosines are sulfated.

It is found in the secreted. Its subcellular location is the extracellular space. It localises to the extracellular matrix. The protein resides in the basement membrane. In terms of biological role, not known. Binds calcium ions. The protein is Glutactin (Glt) of Drosophila melanogaster (Fruit fly).